Consider the following 335-residue polypeptide: Mycobacterial beta-ketoacyl-[acyl-carrier-protein] synthase III (335 aa).

Catalysis depends on residues Cys-122 and His-258. The interval 259–263 (QANSR) is ACP-binding. Residue Asn-289 is part of the active site.

This sequence belongs to the thiolase-like superfamily. FabH family. As to quaternary structure, homodimer.

It is found in the cytoplasm. The catalysed reaction is malonyl-[ACP] + dodecanoyl-CoA + H(+) = 3-oxotetradecanoyl-[ACP] + CO2 + CoA. The protein operates within lipid metabolism; fatty acid biosynthesis. It functions in the pathway lipid metabolism; mycolic acid biosynthesis. Catalyzes the condensation reaction of fatty acid synthesis by the addition to an acyl acceptor of two carbons from malonyl-ACP. Catalyzes the first condensation reaction which initiates fatty acid synthesis and may therefore play a role in governing the total rate of fatty acid production. Possesses both acetoacetyl-ACP synthase and acetyl transacylase activities. Its substrate specificity determines the biosynthesis of branched-chain and/or straight-chain of fatty acids. The protein is Mycobacterial beta-ketoacyl-[acyl-carrier-protein] synthase III of Mycobacterium avium (strain 104).